The chain runs to 65 residues: Large ribosomal subunit protein bL32 (65 aa).

Belongs to the bacterial ribosomal protein bL32 family.

This Metamycoplasma arthritidis (strain 158L3-1) (Mycoplasma arthritidis) protein is Large ribosomal subunit protein bL32.